Reading from the N-terminus, the 343-residue chain is GTPase Obg (343 aa).

The 159-residue stretch at 1–159 folds into the Obg domain; the sequence is MKFLDEAKVY…HWLWLRLKLI (159 aa). The OBG-type G domain maps to 160-327; the sequence is ADAGLVGLPN…ALRALLAAMD (168 aa). GTP contacts are provided by residues 166 to 173, 191 to 195, 212 to 215, 279 to 282, and 308 to 310; these read GLPNAGKS, FTTLH, DIPG, SKAD, and SAA. Mg(2+)-binding residues include serine 173 and threonine 193.

It belongs to the TRAFAC class OBG-HflX-like GTPase superfamily. OBG GTPase family. In terms of assembly, monomer. Requires Mg(2+) as cofactor.

Its subcellular location is the cytoplasm. Functionally, an essential GTPase which binds GTP, GDP and possibly (p)ppGpp with moderate affinity, with high nucleotide exchange rates and a fairly low GTP hydrolysis rate. Plays a role in control of the cell cycle, stress response, ribosome biogenesis and in those bacteria that undergo differentiation, in morphogenesis control. The polypeptide is GTPase Obg (Methylobacterium sp. (strain 4-46)).